The primary structure comprises 279 residues: HTH-type transcriptional regulator HdfR (279 aa).

In terms of domain architecture, HTH lysR-type spans 1-58 (MDTELLKTFLEVSRTRHFGRAAESLYLTQSAVSFRIRQLENQLGVNLFTRHRNNIRLT). The segment at residues 18–37 (FGRAAESLYLTQSAVSFRIR) is a DNA-binding region (H-T-H motif).

It belongs to the LysR transcriptional regulatory family.

Its function is as follows. Negatively regulates the transcription of the flagellar master operon flhDC by binding to the upstream region of the operon. This chain is HTH-type transcriptional regulator HdfR, found in Escherichia fergusonii (strain ATCC 35469 / DSM 13698 / CCUG 18766 / IAM 14443 / JCM 21226 / LMG 7866 / NBRC 102419 / NCTC 12128 / CDC 0568-73).